A 195-amino-acid polypeptide reads, in one-letter code: Imidazoleglycerol-phosphate dehydratase (195 aa).

The protein belongs to the imidazoleglycerol-phosphate dehydratase family.

Its subcellular location is the cytoplasm. It carries out the reaction D-erythro-1-(imidazol-4-yl)glycerol 3-phosphate = 3-(imidazol-4-yl)-2-oxopropyl phosphate + H2O. The protein operates within amino-acid biosynthesis; L-histidine biosynthesis; L-histidine from 5-phospho-alpha-D-ribose 1-diphosphate: step 6/9. The protein is Imidazoleglycerol-phosphate dehydratase of Bordetella petrii (strain ATCC BAA-461 / DSM 12804 / CCUG 43448).